We begin with the raw amino-acid sequence, 469 residues long: ATP synthase subunit beta (469 aa).

Residue 156–163 (GGAGVGKT) participates in ATP binding.

The protein belongs to the ATPase alpha/beta chains family. As to quaternary structure, F-type ATPases have 2 components, CF(1) - the catalytic core - and CF(0) - the membrane proton channel. CF(1) has five subunits: alpha(3), beta(3), gamma(1), delta(1), epsilon(1). CF(0) has three main subunits: a(1), b(2) and c(9-12). The alpha and beta chains form an alternating ring which encloses part of the gamma chain. CF(1) is attached to CF(0) by a central stalk formed by the gamma and epsilon chains, while a peripheral stalk is formed by the delta and b chains.

The protein localises to the cell membrane. It catalyses the reaction ATP + H2O + 4 H(+)(in) = ADP + phosphate + 5 H(+)(out). Functionally, produces ATP from ADP in the presence of a proton gradient across the membrane. The catalytic sites are hosted primarily by the beta subunits. In Bacillus cereus (strain AH820), this protein is ATP synthase subunit beta.